The following is a 158-amino-acid chain: Large ribosomal subunit protein bL19 (158 aa).

Over residues 119–129 the composition is skewed to basic and acidic residues; the sequence is SDRSRVMKDAA. The interval 119–158 is disordered; sequence SDRSRVMKDAARAQQARDAAQGNSSSETQSSTAAVETQGE. The span at 130–139 shows a compositional bias: low complexity; the sequence is RAQQARDAAQ. Polar residues predominate over residues 140-158; sequence GNSSSETQSSTAAVETQGE.

The protein belongs to the bacterial ribosomal protein bL19 family.

This protein is located at the 30S-50S ribosomal subunit interface and may play a role in the structure and function of the aminoacyl-tRNA binding site. The protein is Large ribosomal subunit protein bL19 of Deinococcus geothermalis (strain DSM 11300 / CIP 105573 / AG-3a).